We begin with the raw amino-acid sequence, 483 residues long: Regulatory protein ViaA (483 aa).

Belongs to the ViaA family. As to quaternary structure, homodimer. Interacts with RavA.

It is found in the cytoplasm. In terms of biological role, component of the RavA-ViaA chaperone complex, which may act on the membrane to optimize the function of some of the respiratory chains. ViaA stimulates the ATPase activity of RavA. The polypeptide is Regulatory protein ViaA (Shigella flexneri).